An 820-amino-acid chain; its full sequence is Protein O-mannosyl-transferase 2 (820 aa).

A helical membrane pass occupies residues 124 to 144; the sequence is AAGWWATLAVVTLLSFATRFH. Asn168 carries N-linked (GlcNAc...) asparagine glycosylation. 5 consecutive transmembrane segments (helical) span residues 170–190, 216–236, 261–281, 301–321, and 353–373; these read TFFF…AGYL, GFCA…VLDL, QYIL…LSMV, LTGI…FIIV, and ILCL…VHVM. Asn376 and Asn400 each carry an N-linked (GlcNAc...) asparagine glycan. MIR domains lie at 404–460, 473–529, and 534–591; these read PEHL…IKKY, VEFV…IEVV, and GNRI…IEEH. A glycan (N-linked (GlcNAc...) asparagine) is linked at Asn515. Asn598 and Asn653 each carry an N-linked (GlcNAc...) asparagine glycan. Helical transmembrane passes span 659–679, 713–733, 735–755, and 774–794; these read VYLL…VLYL, LLLG…ILYF, HYFP…DTLL, and VGIL…HPLA.

Belongs to the glycosyltransferase 39 family. In terms of processing, N-glycosylated. In terms of tissue distribution, ubiquitous. Highly expressed in the acrosome of cap phase spermatids, in spermatocytes and liver. Isoform 1 seems to be testis-specific.

The protein localises to the endoplasmic reticulum membrane. The enzyme catalyses a di-trans,poly-cis-dolichyl beta-D-mannosyl phosphate + L-seryl-[protein] = 3-O-(alpha-D-mannosyl)-L-seryl-[protein] + a di-trans,poly-cis-dolichyl phosphate + H(+). It catalyses the reaction a di-trans,poly-cis-dolichyl beta-D-mannosyl phosphate + L-threonyl-[protein] = 3-O-(alpha-D-mannosyl)-L-threonyl-[protein] + a di-trans,poly-cis-dolichyl phosphate + H(+). It functions in the pathway protein modification; protein glycosylation. Transfers mannosyl residues to the hydroxyl group of serine or threonine residues. Coexpression of both POMT1 and POMT2 is necessary for enzyme activity, expression of either POMT1 or POMT2 alone is insufficient. Essentially dedicated to O-mannosylation of alpha-DAG1 and few other proteins but not of cadherins and protocaherins. The sequence is that of Protein O-mannosyl-transferase 2 (Pomt2) from Mus musculus (Mouse).